A 409-amino-acid polypeptide reads, in one-letter code: Ribose-phosphate pyrophosphokinase 1 (409 aa).

Residues aspartate 128, histidine 130, and aspartate 143 each contribute to the Mg(2+) site. Position 199 is a phosphoserine (serine 199).

This sequence belongs to the ribose-phosphate pyrophosphokinase family.

It is found in the cytoplasm. The catalysed reaction is D-ribose 5-phosphate + ATP = 5-phospho-alpha-D-ribose 1-diphosphate + AMP + H(+). It participates in metabolic intermediate biosynthesis; 5-phospho-alpha-D-ribose 1-diphosphate biosynthesis; 5-phospho-alpha-D-ribose 1-diphosphate from D-ribose 5-phosphate (route I): step 1/1. In terms of biological role, 5-phosphoribose 1-diphosphate synthase involved in nucleotide, histidine, and tryptophan biosynthesis. Active in heteromultimeric complexes with other 5-phosphoribose 1-diphosphate synthases. The polypeptide is Ribose-phosphate pyrophosphokinase 1 (Schizosaccharomyces pombe (strain 972 / ATCC 24843) (Fission yeast)).